The following is a 1150-amino-acid chain: Pesticidal crystal protein Cry9Ea (1150 aa).

The protein belongs to the delta endotoxin family.

Its function is as follows. Promotes colloidosmotic lysis by binding to the midgut epithelial cells of insects. The sequence is that of Pesticidal crystal protein Cry9Ea (cry9Ea) from Bacillus thuringiensis subsp. aizawai.